The primary structure comprises 245 residues: Adapter protein MecA (245 aa).

This sequence belongs to the MecA family. As to quaternary structure, homodimer.

In terms of biological role, enables the recognition and targeting of unfolded and aggregated proteins to the ClpC protease or to other proteins involved in proteolysis. The chain is Adapter protein MecA from Streptococcus pneumoniae (strain Hungary19A-6).